Consider the following 353-residue polypeptide: Photosystem II D2 protein (353 aa).

Thr2 is subject to N-acetylthreonine. Thr2 carries the post-translational modification Phosphothreonine. A helical transmembrane segment spans residues 41–61; sequence CAYFALGGWFTGTTFVTSWYT. Residue His118 participates in chlorophyll a binding. The chain crosses the membrane as a helical span at residues 125-141; the sequence is GFMLRQFEIARSVNLRP. The pheophytin a site is built by Gln130 and Asn143. A helical transmembrane segment spans residues 153-166; the sequence is VFVSVFLIYPLGQS. His198 contributes to the chlorophyll a binding site. A helical transmembrane segment spans residues 208–228; it reads AALLCAIHGATVENTLFEDGD. A plastoquinone contacts are provided by His215 and Phe262. His215 provides a ligand contact to Fe cation. His269 contacts Fe cation. A helical membrane pass occupies residues 279–295; sequence GLWMSAIGVVGLALNLR.

It belongs to the reaction center PufL/M/PsbA/D family. PSII is composed of 1 copy each of membrane proteins PsbA, PsbB, PsbC, PsbD, PsbE, PsbF, PsbH, PsbI, PsbJ, PsbK, PsbL, PsbM, PsbT, PsbX, PsbY, PsbZ, Psb30/Ycf12, at least 3 peripheral proteins of the oxygen-evolving complex and a large number of cofactors. It forms dimeric complexes. The D1/D2 heterodimer binds P680, chlorophylls that are the primary electron donor of PSII, and subsequent electron acceptors. It shares a non-heme iron and each subunit binds pheophytin, quinone, additional chlorophylls, carotenoids and lipids. There is also a Cl(-1) ion associated with D1 and D2, which is required for oxygen evolution. The PSII complex binds additional chlorophylls, carotenoids and specific lipids. serves as cofactor.

It localises to the plastid. The protein localises to the chloroplast thylakoid membrane. The enzyme catalyses 2 a plastoquinone + 4 hnu + 2 H2O = 2 a plastoquinol + O2. Photosystem II (PSII) is a light-driven water:plastoquinone oxidoreductase that uses light energy to abstract electrons from H(2)O, generating O(2) and a proton gradient subsequently used for ATP formation. It consists of a core antenna complex that captures photons, and an electron transfer chain that converts photonic excitation into a charge separation. The D1/D2 (PsbA/PsbD) reaction center heterodimer binds P680, the primary electron donor of PSII as well as several subsequent electron acceptors. D2 is needed for assembly of a stable PSII complex. This Tetradesmus obliquus (Green alga) protein is Photosystem II D2 protein.